The chain runs to 364 residues: tRNA N6-adenosine threonylcarbamoyltransferase (364 aa).

Fe cation is bound by residues His-118 and His-122. Residues 140–144 (LVSGG), Asp-173, Gly-186, and Asn-288 contribute to the substrate site. A Fe cation-binding site is contributed by Asp-316.

The protein belongs to the KAE1 / TsaD family. Requires Fe(2+) as cofactor.

Its subcellular location is the cytoplasm. It catalyses the reaction L-threonylcarbamoyladenylate + adenosine(37) in tRNA = N(6)-L-threonylcarbamoyladenosine(37) in tRNA + AMP + H(+). Its function is as follows. Required for the formation of a threonylcarbamoyl group on adenosine at position 37 (t(6)A37) in tRNAs that read codons beginning with adenine. Is involved in the transfer of the threonylcarbamoyl moiety of threonylcarbamoyl-AMP (TC-AMP) to the N6 group of A37, together with TsaE and TsaB. TsaD likely plays a direct catalytic role in this reaction. The sequence is that of tRNA N6-adenosine threonylcarbamoyltransferase from Cereibacter sphaeroides (strain KD131 / KCTC 12085) (Rhodobacter sphaeroides).